Here is a 317-residue protein sequence, read N- to C-terminus: Glycine--tRNA ligase alpha subunit (317 aa).

Belongs to the class-II aminoacyl-tRNA synthetase family. In terms of assembly, tetramer of two alpha and two beta subunits.

The protein resides in the cytoplasm. It catalyses the reaction tRNA(Gly) + glycine + ATP = glycyl-tRNA(Gly) + AMP + diphosphate. The chain is Glycine--tRNA ligase alpha subunit from Acidovorax ebreus (strain TPSY) (Diaphorobacter sp. (strain TPSY)).